Reading from the N-terminus, the 267-residue chain is tRNA pseudouridine synthase A (267 aa).

The active-site Nucleophile is aspartate 52. Residue tyrosine 113 coordinates substrate.

This sequence belongs to the tRNA pseudouridine synthase TruA family. As to quaternary structure, homodimer.

The enzyme catalyses uridine(38/39/40) in tRNA = pseudouridine(38/39/40) in tRNA. In terms of biological role, formation of pseudouridine at positions 38, 39 and 40 in the anticodon stem and loop of transfer RNAs. The polypeptide is tRNA pseudouridine synthase A (Chlamydia pneumoniae (Chlamydophila pneumoniae)).